The following is a 318-amino-acid chain: Transaldolase (318 aa).

Lysine 132 (schiff-base intermediate with substrate) is an active-site residue.

The protein belongs to the transaldolase family. Type 1 subfamily. Homodimer.

The protein localises to the cytoplasm. It carries out the reaction D-sedoheptulose 7-phosphate + D-glyceraldehyde 3-phosphate = D-erythrose 4-phosphate + beta-D-fructose 6-phosphate. The protein operates within carbohydrate degradation; pentose phosphate pathway; D-glyceraldehyde 3-phosphate and beta-D-fructose 6-phosphate from D-ribose 5-phosphate and D-xylulose 5-phosphate (non-oxidative stage): step 2/3. Transaldolase is important for the balance of metabolites in the pentose-phosphate pathway. The sequence is that of Transaldolase from Shewanella baltica (strain OS195).